The chain runs to 344 residues: Protein RecA (344 aa).

65 to 72 (GPESSGKT) is a binding site for ATP.

Belongs to the RecA family.

It localises to the cytoplasm. Can catalyze the hydrolysis of ATP in the presence of single-stranded DNA, the ATP-dependent uptake of single-stranded DNA by duplex DNA, and the ATP-dependent hybridization of homologous single-stranded DNAs. It interacts with LexA causing its activation and leading to its autocatalytic cleavage. The protein is Protein RecA of Rubrobacter xylanophilus (strain DSM 9941 / JCM 11954 / NBRC 16129 / PRD-1).